The sequence spans 703 residues: Capsid vertex component 1 (703 aa).

The tract at residues 200-246 (LGESASPRPQPLARPHAGAPADPPIVGASDPPISPEEQLTAPGGDTT) is disordered.

It belongs to the herpesviridae CVC1 protein family. Interacts (via C-terminus) with capsid vertex component 2/CVC2.

The protein localises to the virion. Its subcellular location is the host nucleus. Its function is as follows. Capsid vertex-specific component that plays a role during viral DNA encapsidation, assuring correct genome cleavage and presumably stabilizing capsids that contain full-length viral genomes. The protein is Capsid vertex component 1 of Human herpesvirus 1 (strain 17) (HHV-1).